A 184-amino-acid polypeptide reads, in one-letter code: Flavodoxin FldP (184 aa).

In terms of domain architecture, Flavodoxin-like spans 4–176 (AVVVYFSGYG…TVKLYAARVA (173 aa)). Residues 10–14 (SGYGH) and 91–147 (GFTN…SVGA) each bind FMN.

The protein belongs to the FldP flavodoxin family. It depends on FMN as a cofactor.

Its function is as follows. Flavodoxins are low-potential electron donors to a number of redox enzymes. FldP protects the cell from oxidative stress and reactive oxygen species (ROS) damage, thereby expanding the capabilities of P.aeruginosa to thrive in hostile environments, and contributes to bacterial survival within the host. In vitro, is able to mediate ferredoxin-NADP(H) reductase (FNR)-driven cytochrome c reduction. In Pseudomonas aeruginosa (strain UCBPP-PA14), this protein is Flavodoxin FldP.